Here is a 74-residue protein sequence, read N- to C-terminus: Protein kish-B (74 aa).

Positions 1–22 (MTNVYSLDGILVFGLLFVCTCA) are cleaved as a signal peptide. Residues 23–52 (YFKKVPRLKTWLLSEKKGVWGVFYKAAVIG) lie on the Extracellular side of the membrane. The helical transmembrane segment at 53-73 (TRLHAAVAIACVVMAFYVLFI) threads the bilayer. A topological domain (cytoplasmic) is located at residue Lys-74.

This sequence belongs to the KISH family.

It localises to the golgi apparatus membrane. In terms of biological role, involved in the early part of the secretory pathway. The sequence is that of Protein kish-B (TMEM167B) from Homo sapiens (Human).